Consider the following 317-residue polypeptide: Ribosomal RNA small subunit methyltransferase H (317 aa).

S-adenosyl-L-methionine contacts are provided by residues Gly-39–His-41, Asp-59, Phe-83, Asp-104, and Gln-111.

Belongs to the methyltransferase superfamily. RsmH family.

The protein resides in the cytoplasm. The catalysed reaction is cytidine(1402) in 16S rRNA + S-adenosyl-L-methionine = N(4)-methylcytidine(1402) in 16S rRNA + S-adenosyl-L-homocysteine + H(+). Specifically methylates the N4 position of cytidine in position 1402 (C1402) of 16S rRNA. This is Ribosomal RNA small subunit methyltransferase H from Paraburkholderia phytofirmans (strain DSM 17436 / LMG 22146 / PsJN) (Burkholderia phytofirmans).